A 96-amino-acid polypeptide reads, in one-letter code: Large ribosomal subunit protein bL21 (96 aa).

Over residues 73-84 (KRRKRYQSRNGH) the composition is skewed to basic residues. The disordered stretch occupies residues 73–96 (KRRKRYQSRNGHRQQMTQIEVVSL). Residues 85–96 (RQQMTQIEVVSL) show a composition bias toward polar residues.

Belongs to the bacterial ribosomal protein bL21 family. In terms of assembly, part of the 50S ribosomal subunit. Contacts protein L20.

This protein binds to 23S rRNA in the presence of protein L20. The chain is Large ribosomal subunit protein bL21 from Chlorobium phaeovibrioides (strain DSM 265 / 1930) (Prosthecochloris vibrioformis (strain DSM 265)).